The primary structure comprises 277 residues: Large ribosomal subunit protein uL2 (277 aa).

Residues 219 to 277 (TVRGSVMNPNDHPHGGGEGKAPVGRKAPSTPWGKPALGLKTRNKKAKSDKLIVRRRNQK) are disordered.

It belongs to the universal ribosomal protein uL2 family. Part of the 50S ribosomal subunit. Forms a bridge to the 30S subunit in the 70S ribosome.

One of the primary rRNA binding proteins. Required for association of the 30S and 50S subunits to form the 70S ribosome, for tRNA binding and peptide bond formation. It has been suggested to have peptidyltransferase activity; this is somewhat controversial. Makes several contacts with the 16S rRNA in the 70S ribosome. In Streptococcus suis (strain 98HAH33), this protein is Large ribosomal subunit protein uL2.